The chain runs to 429 residues: Enolase (429 aa).

Gln-162 provides a ligand contact to (2R)-2-phosphoglycerate. The active-site Proton donor is Glu-204. Asp-241, Glu-283, and Asp-310 together coordinate Mg(2+). Residues Lys-335, Arg-364, Ser-365, and Lys-386 each contribute to the (2R)-2-phosphoglycerate site. Lys-335 (proton acceptor) is an active-site residue.

It belongs to the enolase family. Requires Mg(2+) as cofactor.

The protein resides in the cytoplasm. The protein localises to the secreted. Its subcellular location is the cell surface. The catalysed reaction is (2R)-2-phosphoglycerate = phosphoenolpyruvate + H2O. The protein operates within carbohydrate degradation; glycolysis; pyruvate from D-glyceraldehyde 3-phosphate: step 4/5. Catalyzes the reversible conversion of 2-phosphoglycerate (2-PG) into phosphoenolpyruvate (PEP). It is essential for the degradation of carbohydrates via glycolysis. In Mycolicibacterium gilvum (strain PYR-GCK) (Mycobacterium gilvum (strain PYR-GCK)), this protein is Enolase.